Consider the following 286-residue polypeptide: UDP-3-O-acyl-N-acetylglucosamine deacetylase (286 aa).

Zn(2+) is bound by residues His-79, His-237, and Asp-241. Catalysis depends on His-264, which acts as the Proton donor.

The protein belongs to the LpxC family. Zn(2+) is required as a cofactor.

It carries out the reaction a UDP-3-O-[(3R)-3-hydroxyacyl]-N-acetyl-alpha-D-glucosamine + H2O = a UDP-3-O-[(3R)-3-hydroxyacyl]-alpha-D-glucosamine + acetate. It functions in the pathway glycolipid biosynthesis; lipid IV(A) biosynthesis; lipid IV(A) from (3R)-3-hydroxytetradecanoyl-[acyl-carrier-protein] and UDP-N-acetyl-alpha-D-glucosamine: step 2/6. Its function is as follows. Catalyzes the hydrolysis of UDP-3-O-myristoyl-N-acetylglucosamine to form UDP-3-O-myristoylglucosamine and acetate, the committed step in lipid A biosynthesis. The sequence is that of UDP-3-O-acyl-N-acetylglucosamine deacetylase from Brucella abortus (strain 2308).